The sequence spans 343 residues: Phospholipid phosphatase-related protein type 2 (343 aa).

Helical transmembrane passes span 12–32 (FSII…VILL), 69–89 (VPPA…ILLG), and 129–149 (FLGV…AGQV). An N-linked (GlcNAc...) asparagine glycan is attached at asparagine 165. Transmembrane regions (helical) follow at residues 210–230 (AALC…VFRV), 239–259 (SLCL…VAEY), and 266–286 (VLAG…CVVH). The tract at residues 290–343 (SRPPSGRRLSPWEDLGQAPTMDSPLEKNPRSAGRIRHRHGSPHPSRRTAPAVAT) is disordered. Serine 299 and serine 312 each carry phosphoserine. Residues 322–335 (GRIRHRHGSPHPSR) are compositionally biased toward basic residues.

This sequence belongs to the PA-phosphatase related phosphoesterase family.

The protein localises to the membrane. This chain is Phospholipid phosphatase-related protein type 2, found in Homo sapiens (Human).